Consider the following 234-residue polypeptide: Golgi SNAP receptor complex member 1 (234 aa).

Residues 1–212 (MSETWEALRK…MQKIKTKKQK (212 aa)) are Cytoplasmic-facing. Residues 54–121 (VTTEIEGLIE…RDNVDQVLQR (68 aa)) are a coiled coil. The helical; Anchor for type IV membrane protein transmembrane segment at 213–233 (NTLILAAVISSCLIFTIFWII) threads the bilayer. Position 234 (N234) is a topological domain, vesicular.

It belongs to the GOSR1 family. Component of several multiprotein Golgi SNARE complexes.

The protein resides in the golgi apparatus membrane. Functionally, involved in transport from the ER to the Golgi apparatus as well as in intra-Golgi transport. It belongs to a super-family of proteins called t-SNAREs or soluble NSF (N-ethylmaleimide-sensitive factor) attachment protein receptor. Cooperates with ykt-6 for proper expression of Golgi-resident proteins. Required along with ykt-6 for normal embryonic development, seam cell division or differentiation, and ray formation. This chain is Golgi SNAP receptor complex member 1 (gos-28), found in Caenorhabditis elegans.